We begin with the raw amino-acid sequence, 390 residues long: Pyruvate dehydrogenase E1 component subunit alpha, somatic form, mitochondrial (390 aa).

The transit peptide at 1-29 (MRKMLAAVSRVLSGASQKPASRVLVASRN) directs the protein to the mitochondrion. Lys-63 is subject to N6-acetyllysine; alternate. At Lys-63 the chain carries N6-succinyllysine; alternate. Residues His-92, Tyr-118, Arg-119, Ala-157, Gly-165, Val-167, Asp-196, Gly-197, Ala-198, Asn-225, and Tyr-227 each coordinate pyruvate. Thiamine diphosphate is bound by residues Tyr-118 and Arg-119. Residues Gly-165, Val-167, Asp-196, Gly-197, Ala-198, and Asn-225 each contribute to the thiamine diphosphate site. Residue Asp-196 coordinates Mg(2+). Mg(2+) contacts are provided by Asn-225 and Tyr-227. Phosphoserine; by PDK1 is present on Ser-232. Residue Lys-244 is modified to N6-acetyllysine; alternate. Lys-244 carries the N6-succinyllysine; alternate modification. Position 277 is an N6-succinyllysine (Lys-277). Residue His-292 coordinates thiamine diphosphate. Ser-293 is subject to Phosphoserine; by PDK1, PDK2, PDK3 and PDK4. Ser-295 carries the post-translational modification Phosphoserine. Phosphoserine; by PDK1, PDK2, PDK3 and PDK4 is present on Ser-300. Phosphotyrosine is present on Tyr-301. Lys-313 is subject to N6-acetyllysine; alternate. N6-succinyllysine; alternate is present on Lys-313. 2 positions are modified to N6-acetyllysine: Lys-321 and Lys-336. Lys-385 bears the N6-succinyllysine mark.

Heterotetramer of two PDHA1 and two PDHB subunits. The heterotetramer interacts with DLAT, and is part of the multimeric pyruvate dehydrogenase complex that contains multiple copies of pyruvate dehydrogenase (E1), dihydrolipoamide acetyltransferase (DLAT, E2) and lipoamide dehydrogenase (DLD, E3). These subunits are bound to an inner core composed of about 48 DLAT and 12 PDHX molecules. Requires thiamine diphosphate as cofactor. It depends on Mg(2+) as a cofactor. In terms of processing, phosphorylation at Ser-232, Ser-293 and Ser-300 by PDK family kinases inactivates the enzyme; for this phosphorylation at a single site is sufficient. Dephosphorylation at all three sites, i.e. at Ser-232, Ser-293 and Ser-300, is required for reactivation. Acetylation alters the phosphorylation pattern. Deacetylated by SIRT3. As to expression, ubiquitous.

It is found in the mitochondrion matrix. It catalyses the reaction N(6)-[(R)-lipoyl]-L-lysyl-[protein] + pyruvate + H(+) = N(6)-[(R)-S(8)-acetyldihydrolipoyl]-L-lysyl-[protein] + CO2. With respect to regulation, pyruvate dehydrogenase activity is inhibited by phosphorylation of PDHA1; it is reactivated by dephosphorylation. Functionally, the pyruvate dehydrogenase complex catalyzes the overall conversion of pyruvate to acetyl-CoA and CO(2), and thereby links the glycolytic pathway to the tricarboxylic cycle. The protein is Pyruvate dehydrogenase E1 component subunit alpha, somatic form, mitochondrial (PDHA1) of Homo sapiens (Human).